Consider the following 216-residue polypeptide: MRNQFICVALLLCALNSACGLYFHISETERKCFIEEVPDETTVIVNYKVELYDPRSNGFMPSSPGIGMHVEVRDSDDKVILSRVYSSQGRISFTSHTPGEHVICMYSNSTAWFSGAQLRVHLDIQVGEHAIDYANVAQKEKLTELQLRIRQLLDQVDQITKEQNYQRYREERFRHTSESTNSRVLWWSLAQTVVLVCMGFWQMRHLKSFFEAKKLV.

A signal peptide spans methionine 1 to glycine 20. The Lumenal segment spans residues leucine 21–arginine 183. A GOLD domain is found at arginine 30 to valine 126. The stretch at alanine 134–asparagine 164 forms a coiled coil. Residues valine 184 to methionine 203 traverse the membrane as a helical segment. Over arginine 204 to valine 216 the chain is Cytoplasmic. The Prevents secretion from ER motif lies at lysine 213–valine 216.

Belongs to the EMP24/GP25L family.

It localises to the endoplasmic reticulum membrane. Its function is as follows. Eca and bai are essential, though not redundant, for dorsoventral patterning of the embryo. Specifically required during early embryogenesis for the activity of maternal tkv, while the zygotic tkv is not affected. Involved in Golgi organization. The chain is Transmembrane emp24 domain-containing protein eca from Drosophila willistoni (Fruit fly).